Consider the following 124-residue polypeptide: RNA polymerase-binding protein RbpA (124 aa).

Zn(2+) contacts are provided by Cys-34, His-38, Cys-56, and Cys-59. The sufficient for interaction with HrdB (SigA) stretch occupies residues Glu-73 to Ala-124.

The protein belongs to the RNA polymerase-binding protein RbpA family. As to quaternary structure, homodimer. Forms a complex with the RNAP, and a complex with RNAP plus principal sigma factor HrdB associated with promoter. Binds to free principal sigma factors HrdB and HrdA, probably via the sigma-2 domain, but not to 6 other sigma factors tested. The cofactor is Zn(2+).

Binds to RNA polymerase (RNAP), stimulating transcription from principal, but not alternative sigma factor promoters. Stimulates transcription from several principal sigma factor HrdB (SigA)-dependent promoters but not from a SigR-dependent promoter. Stimulation occurs in the presence of the transcription initiation inhibitor rifampicin (Rif). The sequence is that of RNA polymerase-binding protein RbpA from Streptomyces coelicolor (strain ATCC BAA-471 / A3(2) / M145).